The sequence spans 65 residues: MPKIKTNRAAAKRFRKTASGKYKCGHANRSHILTKKATKRKRNLRQTNHVRAEDAGRLDRMLPYL.

The protein belongs to the bacterial ribosomal protein bL35 family.

The sequence is that of Large ribosomal subunit protein bL35 from Xanthomonas campestris pv. campestris (strain ATCC 33913 / DSM 3586 / NCPPB 528 / LMG 568 / P 25).